Reading from the N-terminus, the 499-residue chain is MDKLQRDGKEDTSRQRRFLYPLLFQEDFYTIAYDHCSNRSSSFEPMGNSSSNDRFSFLTVKRSISRIRQQNGSIVPFVNCDQNKLVGHNKSFYSELVLGGLTAVSEVPFSIRSKHSLEGMNEWASFRSINSIFPLMEDKIPHSNFILDIRIPHLTHPEILVRTFRRWIQDAPFLHSLRSVLHEHRNLIISSNLDQLILIASKKNTRLSLFLWNYYAYECESLLVPLWKRFSHSRSLPYESFIERTPFYRKIEHIVIFYHKYLKKSLWFLKDPSIHYVKYRERSIIALRGTYLLVKKWRYHLTNFWQCHFHLWLQPYRIYIDELSNNCFSFLGYLLSVKMKTSVVRIKMLDDSFITDLITKEFDPIAPTTLLIGSLVKEKFCDISGHPFSRLAWTGLTDDDILDRFDRIWRNIFHYHSGSSKKDGLYRMKYILRLPCAKTLACKHKSAIRAVRERFGSELFTKSFPKERESIFLSFSKTRSQRERIWYSDIIQRNPFVNS.

Belongs to the intron maturase 2 family. MatK subfamily.

The protein localises to the plastid. It localises to the chloroplast. Functionally, usually encoded in the trnK tRNA gene intron. Probably assists in splicing its own and other chloroplast group II introns. This Macrozamia communis (Burrawang palm) protein is Maturase K.